We begin with the raw amino-acid sequence, 287 residues long: Glutamate racemase (287 aa).

Over residues 1-15 the composition is skewed to polar residues; sequence MATKPQDANTTSREA. Residues 1–25 form a disordered region; sequence MATKPQDANTTSREAITSKADSPPR. Residues 32 to 33 and 64 to 65 contribute to the substrate site; these read DS and YG. Residue Cys-96 is the Proton donor/acceptor of the active site. Residue 97–98 participates in substrate binding; that stretch reads NT. Cys-208 acts as the Proton donor/acceptor in catalysis. 209–210 is a substrate binding site; it reads TH.

Belongs to the aspartate/glutamate racemases family.

The catalysed reaction is L-glutamate = D-glutamate. It participates in cell wall biogenesis; peptidoglycan biosynthesis. In terms of biological role, provides the (R)-glutamate required for cell wall biosynthesis. This chain is Glutamate racemase, found in Yersinia pseudotuberculosis serotype IB (strain PB1/+).